Consider the following 261-residue polypeptide: MAEAGQPRPLTAFAPPPPLWKHFTPDNLKRLEEVKKEASKGEDGKPRKKKWTPAELRALQLPPELRFLVPPEIPMSGQYSVFGELQSLSTTLPSLQEQGIEQLYPSTPTETDPNKPSQPSRPFNHAYYLLKISKSLLLNFLEFVGILSITPEQFQSKVEDLRNLFINAHHLLNLYRPHQARESLIMMMEEQLNRSREEIQQMDKMHAEINGFLEQLKAQGIDVDSASKSGENDTAKRTTGDQDANNANSSRLVWDILDGTD.

2 disordered regions span residues methionine 1–glutamate 55 and aspartate 224–serine 250. Basic and acidic residues-rich tracts occupy residues phenylalanine 23 to lysine 45 and glycine 230 to glycine 240. A compositionally biased stretch (polar residues) spans aspartate 241–serine 250.

This sequence belongs to the Mediator complex subunit 7 family. Component of the Mediator complex.

It localises to the nucleus. In terms of biological role, component of the Mediator complex, a coactivator involved in the regulated transcription of nearly all RNA polymerase II-dependent genes. Mediator functions as a bridge to convey information from gene-specific regulatory proteins to the basal RNA polymerase II transcription machinery. Mediator is recruited to promoters by direct interactions with regulatory proteins and serves as a scaffold for the assembly of a functional preinitiation complex with RNA polymerase II and the general transcription factors. In Neosartorya fischeri (strain ATCC 1020 / DSM 3700 / CBS 544.65 / FGSC A1164 / JCM 1740 / NRRL 181 / WB 181) (Aspergillus fischerianus), this protein is Mediator of RNA polymerase II transcription subunit 7 (med7).